A 313-amino-acid chain; its full sequence is 2,3-dihydroxyphenylpropionate/2,3-dihydroxicinnamic acid 1,2-dioxygenase (313 aa).

The active-site Proton donor is the His-115. The Proton acceptor role is filled by His-179.

The protein belongs to the LigB/MhpB extradiol dioxygenase family. In terms of assembly, homotetramer. The cofactor is Fe(2+).

The enzyme catalyses 3-(2,3-dihydroxyphenyl)propanoate + O2 = (2Z,4E)-2-hydroxy-6-oxonona-2,4-dienedioate + H(+). It catalyses the reaction (2E)-3-(2,3-dihydroxyphenyl)prop-2-enoate + O2 = (2Z,4E,7E)-2-hydroxy-6-oxonona-2,4,7-trienedioate + H(+). It functions in the pathway aromatic compound metabolism; 3-phenylpropanoate degradation. Functionally, catalyzes the non-heme iron(II)-dependent oxidative cleavage of 2,3-dihydroxyphenylpropionic acid and 2,3-dihydroxicinnamic acid into 2-hydroxy-6-ketononadienedioate and 2-hydroxy-6-ketononatrienedioate, respectively. The sequence is that of 2,3-dihydroxyphenylpropionate/2,3-dihydroxicinnamic acid 1,2-dioxygenase from Mycolicibacterium smegmatis (strain ATCC 700084 / mc(2)155) (Mycobacterium smegmatis).